We begin with the raw amino-acid sequence, 292 residues long: Mycothiol acetyltransferase (292 aa).

2 N-acetyltransferase domains span residues 13-168 (ALDR…KWLQ) and 159-292 (KSVA…VYEK). Glu-40 serves as a coordination point for 1D-myo-inositol 2-(L-cysteinylamino)-2-deoxy-alpha-D-glucopyranoside. An acetyl-CoA-binding site is contributed by 77–79 (LAV). Residues Glu-179, Lys-218, and Glu-226 each contribute to the 1D-myo-inositol 2-(L-cysteinylamino)-2-deoxy-alpha-D-glucopyranoside site. Residues 230–232 (VGL) and 237–243 (RGRGLGD) each bind acetyl-CoA. 1D-myo-inositol 2-(L-cysteinylamino)-2-deoxy-alpha-D-glucopyranoside is bound at residue Tyr-264.

This sequence belongs to the acetyltransferase family. MshD subfamily. Monomer.

The catalysed reaction is 1D-myo-inositol 2-(L-cysteinylamino)-2-deoxy-alpha-D-glucopyranoside + acetyl-CoA = mycothiol + CoA + H(+). Its function is as follows. Catalyzes the transfer of acetyl from acetyl-CoA to desacetylmycothiol (Cys-GlcN-Ins) to form mycothiol. This is Mycothiol acetyltransferase from Corynebacterium glutamicum (strain ATCC 13032 / DSM 20300 / JCM 1318 / BCRC 11384 / CCUG 27702 / LMG 3730 / NBRC 12168 / NCIMB 10025 / NRRL B-2784 / 534).